The primary structure comprises 58 residues: U11-myrmicitoxin-Tb1a (58 aa).

Positions 1–24 (LAMAMGDAVADAQARAMAAAYAIA) are excised as a propeptide. A disulfide bridge connects residues Cys-34 and Cys-57.

This sequence belongs to the formicidae venom precursor-01 superfamily. Expressed by the venom gland.

It localises to the secreted. The protein localises to the target cell membrane. Neurotoxin that causes irreversible rapid flaccid paralysis in blowflies and honeybees upon intrathoracic injection. Causes a quick and irreversible cytolytic effect (at 10 uM) indicating it possibly acts as a pore-forming peptide. Shows only weak effect on aphids (A.pisum) at high doses 24 hours post intrathoracic injection. In vitro, is not cytotoxic on the dipteran S2 Drosophila embryonic cell line. The polypeptide is U11-myrmicitoxin-Tb1a (Tetramorium bicarinatum (Tramp ant)).